A 628-amino-acid chain; its full sequence is (+)-alpha-pinene synthase, chloroplastic (628 aa).

Residues 1–48 constitute a chloroplast transit peptide; the sequence is MALVSAVPLNSKLCLRRTLFGFSHELKAIHSTVPNLGMCRGGKSIAPS. Mg(2+) is bound by residues D379, D383, and D531. The short motif at 379-383 is the DDXXD motif element; the sequence is DDIYD. S539 serves as a coordination point for K(+).

This sequence belongs to the terpene synthase family. Tpsd subfamily. It depends on Mg(2+) as a cofactor. Mn(2+) serves as cofactor. The cofactor is K(+).

Its subcellular location is the plastid. The protein localises to the chloroplast. The enzyme catalyses (2E)-geranyl diphosphate = (1R,5R)-alpha-pinene + diphosphate. Its pathway is terpene metabolism; oleoresin biosynthesis. Involved in defensive oleoresin formation in conifers in response to insect attack or other injury. Involved in monoterpene (C10) olefins biosynthesis. Produces mainly (+)-alpha-pinene (97%) with a small amount of (-)-alpha-pinene (3%). This Pinus taeda (Loblolly pine) protein is (+)-alpha-pinene synthase, chloroplastic (PT30).